The sequence spans 243 residues: MTFYSVRMRASLQGQHISGAETLVSCPTDVPRLTAQFVERAMNHAKGVPDAITTKIESIPESDIQRVPRLLTREYQARDCHDAHGFVQQQLTTVCSAEVAQKAVDLLLTIRNMRGAILLDAHSARRLEPDHNRGIRASNFGDASSISAKPDNKEIGISKNHYHEALILSSKVMSAPGIIAEICISDDPDYTTGYVSLNGVYTRVHTMKRLGSPLGGRVFILDSEKASVATAINHIENTPVLIL.

It belongs to the BioW family. As to quaternary structure, homodimer. Requires Mg(2+) as cofactor.

The catalysed reaction is heptanedioate + ATP + CoA = 6-carboxyhexanoyl-CoA + AMP + diphosphate. It participates in metabolic intermediate metabolism; pimeloyl-CoA biosynthesis; pimeloyl-CoA from pimelate: step 1/1. Functionally, catalyzes the transformation of pimelate into pimeloyl-CoA with concomitant hydrolysis of ATP to AMP. This chain is 6-carboxyhexanoate--CoA ligase, found in Corynebacterium pseudotuberculosis (strain FRC41).